We begin with the raw amino-acid sequence, 80 residues long: Growth factor (80 aa).

Positions 1–19 are cleaved as a signal peptide; it reads MATRNLVASLLCIMYAVHA. The region spanning 29 to 73 is the EGF-like domain; the sequence is HVKVCNHDYENYCLNNGTCFTIALDNVSITPFCVCRINYEGSRCQ. 3 disulfides stabilise this stretch: Cys33–Cys47, Cys41–Cys61, and Cys63–Cys72. Residues Asn44 and Asn54 are each glycosylated (N-linked (GlcNAc...) asparagine; by host).

It is found in the secreted. The protein is Growth factor of Oryctolagus cuniculus (Rabbit).